Reading from the N-terminus, the 98-residue chain is Sec-independent protein translocase protein TatA (98 aa).

Residues 1 to 21 (MGAMSPWHWAIVALVVVILFG) traverse the membrane as a helical segment. The segment at 43-98 (VKEMQNDNSTPAPTAQSAPPPQSAPAELPVADTTTAPVTPPAPVQPQSQHTEPKSA) is disordered. Low complexity predominate over residues 66 to 79 (APAELPVADTTTAP).

Belongs to the TatA/E family. As to quaternary structure, the Tat system comprises two distinct complexes: a TatABC complex, containing multiple copies of TatA, TatB and TatC subunits, and a separate TatA complex, containing only TatA subunits. Substrates initially bind to the TatABC complex, which probably triggers association of the separate TatA complex to form the active translocon.

It localises to the cell membrane. Its function is as follows. Part of the twin-arginine translocation (Tat) system that transports large folded proteins containing a characteristic twin-arginine motif in their signal peptide across membranes. TatA could form the protein-conducting channel of the Tat system. The chain is Sec-independent protein translocase protein TatA from Rhodococcus erythropolis (Arthrobacter picolinophilus).